Consider the following 159-residue polypeptide: Phosphopantetheine adenylyltransferase (159 aa).

Threonine 10 is a substrate binding site. Residues 10 to 11 and histidine 18 each bind ATP; that span reads TF. Substrate-binding residues include lysine 42, methionine 74, and arginine 88. ATP is bound by residues 89–91, glutamate 99, and 124–130; these read GLR and WSFISSS.

It belongs to the bacterial CoaD family. In terms of assembly, homohexamer. It depends on Mg(2+) as a cofactor.

It is found in the cytoplasm. It carries out the reaction (R)-4'-phosphopantetheine + ATP + H(+) = 3'-dephospho-CoA + diphosphate. It participates in cofactor biosynthesis; coenzyme A biosynthesis; CoA from (R)-pantothenate: step 4/5. Its function is as follows. Reversibly transfers an adenylyl group from ATP to 4'-phosphopantetheine, yielding dephospho-CoA (dPCoA) and pyrophosphate. The sequence is that of Phosphopantetheine adenylyltransferase from Salmonella agona (strain SL483).